Here is a 745-residue protein sequence, read N- to C-terminus: Polyribonucleotide nucleotidyltransferase (745 aa).

Mg(2+) contacts are provided by D487 and D493. The region spanning 554-613 (PRIETMQIPTDKIRDVIGTGGKIIREIVEKTGAKINIEDTGVVKIASSDGKAIKAAYNWI) is the KH domain. Residues 623-691 (GTIYDGTIVK…ERGKIRLSMK (69 aa)) enclose the S1 motif domain. The disordered stretch occupies residues 695–745 (QETGEDITEKLKAERAERGEPEREERSDRGDRGDRGPRRDRGERRRESSGE). The segment covering 701-745 (ITEKLKAERAERGEPEREERSDRGDRGDRGPRRDRGERRRESSGE) has biased composition (basic and acidic residues).

This sequence belongs to the polyribonucleotide nucleotidyltransferase family. The cofactor is Mg(2+).

Its subcellular location is the cytoplasm. It carries out the reaction RNA(n+1) + phosphate = RNA(n) + a ribonucleoside 5'-diphosphate. Involved in mRNA degradation. Catalyzes the phosphorolysis of single-stranded polyribonucleotides processively in the 3'- to 5'-direction. This Methylorubrum populi (strain ATCC BAA-705 / NCIMB 13946 / BJ001) (Methylobacterium populi) protein is Polyribonucleotide nucleotidyltransferase.